We begin with the raw amino-acid sequence, 240 residues long: Ribosomal RNA large subunit methyltransferase E (240 aa).

The tract at residues 1 to 28 (MSSSPRSPDARPLKVRVKSARTRSSSSQ) is disordered. Residues Gly-80, Trp-82, Asp-103, Asp-119, and Asp-143 each coordinate S-adenosyl-L-methionine. The active-site Proton acceptor is Lys-183.

This sequence belongs to the class I-like SAM-binding methyltransferase superfamily. RNA methyltransferase RlmE family.

The protein localises to the cytoplasm. It carries out the reaction uridine(2552) in 23S rRNA + S-adenosyl-L-methionine = 2'-O-methyluridine(2552) in 23S rRNA + S-adenosyl-L-homocysteine + H(+). Functionally, specifically methylates the uridine in position 2552 of 23S rRNA at the 2'-O position of the ribose in the fully assembled 50S ribosomal subunit. The protein is Ribosomal RNA large subunit methyltransferase E of Azorhizobium caulinodans (strain ATCC 43989 / DSM 5975 / JCM 20966 / LMG 6465 / NBRC 14845 / NCIMB 13405 / ORS 571).